Here is a 97-residue protein sequence, read N- to C-terminus: Mapk-regulated corepressor-interacting protein 1 (97 aa).

Residues 1 to 29 (MTSSPVSRVVYNGKRNSSPRSPTNSSEIF) form a disordered region. Low complexity predominate over residues 15–26 (RNSSPRSPTNSS). A Phosphoserine modification is found at serine 21. Phosphothreonine is present on threonine 30. Tyrosine 41 carries the phosphotyrosine modification. N6-acetyllysine is present on lysine 79. The PXDLS motif motif lies at 80–84 (PIDLS).

The protein belongs to the MCRIP family. As to quaternary structure, interacts (unphosphorylated form, via the PXDLS motif) with CTBP1, competitively inhibiting CTBP-ZEB1 interaction. Interacts with CTBP2. Interacts with MCRIP2. Interacts with DDX6. Post-translationally, phosphorylation by MAPK3/1 (ERK1/2) regulates MCRIP1 binding to CTBP(s). As to expression, widely expressed (at protein level).

Its subcellular location is the nucleus. The protein localises to the cytoplasm. The protein resides in the stress granule. Functionally, the phosphorylation status of MCRIP1 functions as a molecular switch to regulate epithelial-mesenchymal transition. Unphosphorylated MCRIP1 binds to and inhibits the transcriptional corepressor CTBP(s). When phosphorylated by MAPK/ERK, MCRIP1 releases CTBP(s) resulting in transcriptional silencing of the E-cadherin gene and induction of epithelial-mesenchymal transition. The sequence is that of Mapk-regulated corepressor-interacting protein 1 (Mcrip1) from Mus musculus (Mouse).